Reading from the N-terminus, the 361-residue chain is Phosphoserine aminotransferase (361 aa).

Residue Arg-43 coordinates L-glutamate. Pyridoxal 5'-phosphate-binding positions include 77–78 (AS), Trp-103, Thr-153, Asp-173, and Gln-196. N6-(pyridoxal phosphate)lysine is present on Lys-197. 238–239 (NT) contributes to the pyridoxal 5'-phosphate binding site.

This sequence belongs to the class-V pyridoxal-phosphate-dependent aminotransferase family. SerC subfamily. Homodimer. Requires pyridoxal 5'-phosphate as cofactor.

It is found in the cytoplasm. The enzyme catalyses O-phospho-L-serine + 2-oxoglutarate = 3-phosphooxypyruvate + L-glutamate. The catalysed reaction is 4-(phosphooxy)-L-threonine + 2-oxoglutarate = (R)-3-hydroxy-2-oxo-4-phosphooxybutanoate + L-glutamate. It participates in amino-acid biosynthesis; L-serine biosynthesis; L-serine from 3-phospho-D-glycerate: step 2/3. It functions in the pathway cofactor biosynthesis; pyridoxine 5'-phosphate biosynthesis; pyridoxine 5'-phosphate from D-erythrose 4-phosphate: step 3/5. In terms of biological role, catalyzes the reversible conversion of 3-phosphohydroxypyruvate to phosphoserine and of 3-hydroxy-2-oxo-4-phosphonooxybutanoate to phosphohydroxythreonine. The polypeptide is Phosphoserine aminotransferase (Azotobacter vinelandii (strain DJ / ATCC BAA-1303)).